A 757-amino-acid polypeptide reads, in one-letter code: RNA-directed RNA polymerase catalytic subunit (757 aa).

Short sequence motifs (nuclear localization signal) lie at residues 187-195 (RKRRVRDNM) and 203-216 (RTIG…NKRG). Residues 249–256 (RGFVYFVE) form a promoter-binding site region. The RdRp catalytic domain occupies 286 to 483 (VRKMMTNSQD…GINMSKKKSY (198 aa)).

This sequence belongs to the influenza viruses polymerase PB1 family. As to quaternary structure, influenza RNA polymerase is composed of three subunits: PB1, PB2 and PA. Interacts (via N-terminus) with PA (via C-terminus). Interacts (via C-terminus) with PB2 (via N-terminus); this interaction is essential for transcription initiation. Interacts (via C-terminus) with human PKP2 (via N-terminus); the interaction competitively inhibits the interaction between the RNA polymerase subunits PB1 and PB2. Phosphorylated by host PRKCA.

It localises to the host nucleus. It is found in the host cytoplasm. The catalysed reaction is RNA(n) + a ribonucleoside 5'-triphosphate = RNA(n+1) + diphosphate. Its function is as follows. RNA-dependent RNA polymerase which is responsible for replication and transcription of virus RNA segments. The transcription of viral mRNAs occurs by a unique mechanism called cap-snatching. 5' methylated caps of cellular mRNAs are cleaved after 10-13 nucleotides by PA. In turn, these short capped RNAs are used as primers by PB1 for transcription of viral mRNAs. During virus replication, PB1 initiates RNA synthesis and copy vRNA into complementary RNA (cRNA) which in turn serves as a template for the production of more vRNAs. This is RNA-directed RNA polymerase catalytic subunit from Influenza A virus (strain A/Swine/Ontario/2/1981 H1N1).